Consider the following 262-residue polypeptide: Aminoglycoside (3'') (9) adenylyltransferase (262 aa).

It carries out the reaction streptomycin + ATP = 3''-O-adenylylstreptomycin + diphosphate. The catalysed reaction is spectinomycin + ATP = 9-O-adenylylspectinomycin + diphosphate. Mediates bacterial resistance to the antibiotics streptomycin and spectinomycin. This Klebsiella pneumoniae protein is Aminoglycoside (3'') (9) adenylyltransferase.